The sequence spans 267 residues: 5'-nucleotidase SurE (267 aa).

Positions 9, 10, 40, and 97 each coordinate a divalent metal cation.

It belongs to the SurE nucleotidase family. Requires a divalent metal cation as cofactor.

The protein localises to the cytoplasm. The catalysed reaction is a ribonucleoside 5'-phosphate + H2O = a ribonucleoside + phosphate. In terms of biological role, nucleotidase that shows phosphatase activity on nucleoside 5'-monophosphates. The polypeptide is 5'-nucleotidase SurE (Helicobacter pylori (strain Shi470)).